Reading from the N-terminus, the 493-residue chain is MASKATLLLAFTLLFATCIARHQQRQQQQNQCQLQNIEALEPIEVIQAEAGVTEIWDAYDQQFQCAWSILFDTGFNLVAFSCLPTSTPLFWPSSREGVILPGCRRTYEYSQEQQFSGEGGRRGGGEGTFRTVIRKLENLKEGDVVAIPTGTAHWLHNDGNTELVVVFLDTQNHENQLDENQRRFFLAGNPQAQAQSQQQQQRQPRQQSPQRQRQRQRQGQGQNAGNIFNGFTPELIAQSFNVDQETAQKLQGQNDQRGHIVNVGQDLQIVRPPQDRRSPRQQQEQATSPRQQQEQQQGRRGGWSNGVEETICSMKFKVNIDNPSQADFVNPQAGSIANLNSFKFPILEHLRLSVERGELRPNAIQSPHWTINAHNLLYVTEGALRVQIVDNQGNSVFDNELREGQVVVIPQNFAVIKRANEQGSRWVSFKTNDNAMIANLAGRVSASAASPLTLWANRYQLSREEAQQLKFSQRETVLFAPSFSRGQGIRASR.

Positions 1–20 are cleaved as a signal peptide; that stretch reads MASKATLLLAFTLLFATCIA. 2 disulfide bridges follow: Cys-32–Cys-65 and Cys-103–Cys-312. The region spanning 37–248 is the Cupin type-1 1 domain; it reads IEALEPIEVI…SFNVDQETAQ (212 aa). 2 disordered regions span residues 190–229 and 269–305; these read PQAQ…NIFN and IVRP…GWSN. 2 stretches are compositionally biased toward low complexity: residues 191–221 and 280–298; these read QAQA…QGQG and RQQQ…QQQG. The Cupin type-1 2 domain occupies 318–467; that stretch reads VNIDNPSQAD…RYQLSREEAQ (150 aa).

Belongs to the 11S seed storage protein (globulins) family. In terms of assembly, hexamer; each subunit is composed of an acidic and a basic chain derived from a single precursor and linked by a disulfide bond.

Its function is as follows. This is a seed storage protein. This is 11S globulin seed storage protein G3 (HAG3) from Helianthus annuus (Common sunflower).